A 369-amino-acid chain; its full sequence is Maltose/maltodextrin import ATP-binding protein MalK (369 aa).

Positions 4–234 constitute an ABC transporter domain; that stretch reads VTLRNVCKSY…PKNRFVAGFI (231 aa). 36 to 43 contacts ATP; that stretch reads GPSGCGKS.

Belongs to the ABC transporter superfamily. Maltooligosaccharide importer (TC 3.A.1.1.1) family. In terms of assembly, the complex is composed of two ATP-binding proteins (MalK), two transmembrane proteins (MalG and MalK) and a solute-binding protein (MalE).

It localises to the cell inner membrane. The catalysed reaction is D-maltose(out) + ATP + H2O = D-maltose(in) + ADP + phosphate + H(+). Its function is as follows. Part of the ABC transporter complex MalEFGK involved in maltose/maltodextrin import. Responsible for energy coupling to the transport system. The sequence is that of Maltose/maltodextrin import ATP-binding protein MalK from Aliivibrio fischeri (strain ATCC 700601 / ES114) (Vibrio fischeri).